Consider the following 548-residue polypeptide: 5-epi-aristolochene synthase 1 (548 aa).

Asp301, Asp305, Asp444, Thr448, and Glu452 together coordinate Mg(2+). The DDXXD motif signature appears at 301–305 (DDTFD).

It belongs to the terpene synthase family. In terms of assembly, monomer. Requires Mg(2+) as cofactor. As to expression, expressed in roots, but not in shoots.

It localises to the cytoplasm. It catalyses the reaction (2E,6E)-farnesyl diphosphate = (+)-5-epi-aristolochene + diphosphate. Its pathway is secondary metabolite biosynthesis; terpenoid biosynthesis. Catalyzes the cyclization of trans,trans-farnesyl diphosphate (FPP) to the bicyclic intermediate 5-epi-aristolochene, initial step in the conversion of FPP to the sesquiterpenoid antifungal phytoalexin capsidiol. Produces germacrene A as an enzyme-bound intermediate that is not released by the enzyme, but is further cyclized to produce the bicyclic 5-epi-aristolochene. This Nicotiana attenuata (Coyote tobacco) protein is 5-epi-aristolochene synthase 1 (EAS).